The following is a 1373-amino-acid chain: DNA-directed RNA polymerase subunit beta (1373 aa).

Belongs to the RNA polymerase beta chain family. The RNAP catalytic core consists of 2 alpha, 1 beta, 1 beta' and 1 omega subunit. When a sigma factor is associated with the core the holoenzyme is formed, which can initiate transcription.

It catalyses the reaction RNA(n) + a ribonucleoside 5'-triphosphate = RNA(n+1) + diphosphate. Its function is as follows. DNA-dependent RNA polymerase catalyzes the transcription of DNA into RNA using the four ribonucleoside triphosphates as substrates. The polypeptide is DNA-directed RNA polymerase subunit beta (Lawsonia intracellularis (strain PHE/MN1-00)).